The following is a 98-amino-acid chain: MLCLADIRIVASCSAAIKSGYGQQPWLAHVAGPYANSLFDDVPADSYHAAVEYLRLIPASCYLLDGYAAGRDDCRAHCIAPRNRRLYCASYQVCVCRY.

Disulfide bonds link Cys61–Cys88, Cys74–Cys94, and Cys78–Cys96.

This sequence belongs to the invertebrate defensin family. Type 1 subfamily.

The protein is Defensin of Mamestra brassicae (Cabbage moth).